The sequence spans 206 residues: Fibroblast growth factor 4 (206 aa).

An N-terminal signal peptide occupies residues 1–29 (MAGPGTAAAALLPAVLLAVLAPWAGRGGA).

It belongs to the heparin-binding growth factors family. As to quaternary structure, interacts with FGFR1, FGFR2, FGFR3 and FGFR4. Affinity between fibroblast growth factors (FGFs) and their receptors is increased by heparan sulfate glycosaminoglycans that function as coreceptors.

It localises to the secreted. Functionally, plays an important role in the regulation of embryonic development, cell proliferation, and cell differentiation. Required for normal limb and cardiac valve development during embryogenesis. May play a role in embryonic molar tooth bud development via inducing the expression of MSX1, MSX2 and MSX1-mediated expression of SDC1 in dental mesenchyme cells. In Bos taurus (Bovine), this protein is Fibroblast growth factor 4.